The primary structure comprises 568 residues: Involucrin (568 aa).

Disordered stretches follow at residues 23 to 499 (CSPA…EKEL) and 517 to 568 (RKKH…HEVQ). Positions 25-36 (PAQTQQEQTKQP) are enriched in low complexity. Basic and acidic residues predominate over residues 49-77 (TQEKGFPKHEEKEANPVKDLPEQESEHHQ). The segment covering 78–88 (QPGPQKQQLQV) has biased composition (low complexity). Over residues 89–106 (KKPEQELQEQELHSEKQP) the composition is skewed to basic and acidic residues. Low complexity-rich tracts occupy residues 107 to 121 (QEPQ…QQQR), 133 to 154 (HQQP…QDVL), and 172 to 181 (PELPLGQQQK). Positions 193–213 (KQQKLHLVERHQEPQEQELHH) are enriched in basic and acidic residues. Residues 217-232 (QKQQQPQEQELQLVQH) show a composition bias toward low complexity. 2 stretches are compositionally biased toward basic and acidic residues: residues 266–333 (ESHE…HQET) and 345–456 (KPHE…HLGK). Positions 457 to 467 (QQEQQIEYEGY) are enriched in low complexity. A Phosphoserine modification is found at Ser-472. Basic and acidic residues-rich tracts occupy residues 478 to 499 (KQEK…EKEL), 517 to 532 (RKKH…EKQI), and 551 to 568 (VKED…HEVQ).

Belongs to the involucrin family. In terms of assembly, directly or indirectly cross-linked to cornifelin (CNFN). In terms of processing, substrate of transglutaminase. Specific glutamines or lysines are cross-linked to keratins, desmoplakin and to inter involucrin molecules. In terms of tissue distribution, keratinocytes of epidermis and other stratified squamous epithelia.

The protein localises to the cytoplasm. Functionally, part of the insoluble cornified cell envelope (CE) of stratified squamous epithelia. This Rattus norvegicus (Rat) protein is Involucrin (Ivl).